We begin with the raw amino-acid sequence, 544 residues long: Prolyl 4-hydroxylase subunit alpha-3 (544 aa).

Residues 1 to 19 form the signal peptide; sequence MGPGARLAALLAVLALGTG. The stretch at 107–131 forms a coiled coil; that stretch reads LEASENIRALKDGYEKVEQDLPAFE. A TPR repeat occupies 227–260; sequence EDALDHLAFAYFRAGNVSCALSLSREFLLYSPDN. N-linked (GlcNAc...) asparagine glycosylation is present at N242. Positions 422-529 constitute a Fe2OG dioxygenase domain; the sequence is YAEYLQVVNY…KWVANKWIHE (108 aa). Fe cation is bound by residues H440 and D442. N-linked (GlcNAc...) asparagine glycosylation is present at N482. H510 contributes to the Fe cation binding site. K520 is a binding site for 2-oxoglutarate.

This sequence belongs to the P4HA family. As to quaternary structure, heterotetramer of two alpha-3 chains and two beta chains (the beta chain is the multi-functional PDI). Fe(2+) serves as cofactor. The cofactor is L-ascorbate. Post-translationally, N-glycosylation plays no role in the catalytic activity. Highly expressed in placenta, liver and fetal skin. Weakly expressed in fetal epiphyseal cartilage, fetal liver, fibroblast, lung and skeletal muscle. Expressed also in fibrous cap of carotid atherosclerotic lesions.

The protein localises to the endoplasmic reticulum lumen. The catalysed reaction is L-prolyl-[collagen] + 2-oxoglutarate + O2 = trans-4-hydroxy-L-prolyl-[collagen] + succinate + CO2. In terms of biological role, catalyzes the post-translational formation of 4-hydroxyproline in -Xaa-Pro-Gly- sequences in collagens and other proteins. This Homo sapiens (Human) protein is Prolyl 4-hydroxylase subunit alpha-3 (P4HA3).